The sequence spans 146 residues: Large ribosomal subunit protein uL13 (146 aa).

Residues 125-146 are disordered; the sequence is YAGPKHPHAAQQPKVYEPRPRG.

Belongs to the universal ribosomal protein uL13 family. In terms of assembly, part of the 50S ribosomal subunit.

Functionally, this protein is one of the early assembly proteins of the 50S ribosomal subunit, although it is not seen to bind rRNA by itself. It is important during the early stages of 50S assembly. The polypeptide is Large ribosomal subunit protein uL13 (Roseiflexus sp. (strain RS-1)).